Consider the following 552-residue polypeptide: Membrane protein insertase YidC (552 aa).

Residues 3–23 (IKRTVLWVIFFMSAVMLFDNW) traverse the membrane as a helical segment. Residues 36-59 (SATPTRTVGSAAPGTTTPGTQPAD) are disordered. Positions 42–59 (TVGSAAPGTTTPGTQPAD) are enriched in low complexity. The next 3 helical transmembrane spans lie at 364 to 384 (WGWS…PLSA), 430 to 450 (FGGC…YWVL), and 504 to 524 (MMFM…GLVL).

Belongs to the OXA1/ALB3/YidC family. Type 1 subfamily. In terms of assembly, interacts with the Sec translocase complex via SecD. Specifically interacts with transmembrane segments of nascent integral membrane proteins during membrane integration.

The protein localises to the cell inner membrane. Required for the insertion and/or proper folding and/or complex formation of integral membrane proteins into the membrane. Involved in integration of membrane proteins that insert both dependently and independently of the Sec translocase complex, as well as at least some lipoproteins. Aids folding of multispanning membrane proteins. The chain is Membrane protein insertase YidC from Paraburkholderia xenovorans (strain LB400).